The following is a 501-amino-acid chain: Probable cytosol aminopeptidase (501 aa).

2 residues coordinate Mn(2+): Lys-257 and Asp-262. The active site involves Lys-269. The Mn(2+) site is built by Asp-281, Asp-341, and Glu-343. The active site involves Arg-345.

The protein belongs to the peptidase M17 family. The cofactor is Mn(2+).

It localises to the cytoplasm. It carries out the reaction Release of an N-terminal amino acid, Xaa-|-Yaa-, in which Xaa is preferably Leu, but may be other amino acids including Pro although not Arg or Lys, and Yaa may be Pro. Amino acid amides and methyl esters are also readily hydrolyzed, but rates on arylamides are exceedingly low.. The enzyme catalyses Release of an N-terminal amino acid, preferentially leucine, but not glutamic or aspartic acids.. Presumably involved in the processing and regular turnover of intracellular proteins. Catalyzes the removal of unsubstituted N-terminal amino acids from various peptides. This is Probable cytosol aminopeptidase from Synechococcus sp. (strain RCC307).